We begin with the raw amino-acid sequence, 922 residues long: Protein translocase subunit SecA (922 aa).

Residues Gln87, 105 to 109 (GEGKT), and Asp516 each bind ATP. The disordered stretch occupies residues 867–912 (YTAPTETGEPETLPDPRTAGAGGDGLNLPEGVRIGRNDPCPCGSGK). Zn(2+)-binding residues include Cys906, Cys908, Cys917, and His918.

Belongs to the SecA family. As to quaternary structure, monomer and homodimer. Part of the essential Sec protein translocation apparatus which comprises SecA, SecYEG and auxiliary proteins SecDF-YajC and YidC. Zn(2+) serves as cofactor.

Its subcellular location is the cell inner membrane. It localises to the cytoplasm. The enzyme catalyses ATP + H2O + cellular proteinSide 1 = ADP + phosphate + cellular proteinSide 2.. Part of the Sec protein translocase complex. Interacts with the SecYEG preprotein conducting channel. Has a central role in coupling the hydrolysis of ATP to the transfer of proteins into and across the cell membrane, serving both as a receptor for the preprotein-SecB complex and as an ATP-driven molecular motor driving the stepwise translocation of polypeptide chains across the membrane. This chain is Protein translocase subunit SecA, found in Paracidovorax citrulli (strain AAC00-1) (Acidovorax citrulli).